Here is a 769-residue protein sequence, read N- to C-terminus: MDIGKKHVIPKSQYRRKRREFFHNEDREENLNQHQDKQNIDNTTSKKADKQIHKDSIDKHERFKNSLSSHLEQRNRDVNENKAEESKSNQDSKSAYNRDHYLTDDVSKKQNSLDSVDQDTEKSKYYEQNSEATLSTKSTDKVESTEMRKLSSDKNKVGHEEQHVLSKPSEHDKETRIDSESSRTDSDSSMQTEKIKKDSSDGNKSSNLKSEVISDKSNTVPKLSESDDEVNNQKPLTLPEEQKLKRQQSQNEQTKTYTYGDSEQNDKSNHENDLSHHIPSISDDKDNVMRENHIVDDNPDNDINTPSLSKTDDDRKLDEKIHVEDKHKQNADSSETVGYQSQSTASHRSTEKRNISINDHDKLNGQKTNTKTSANNNQKKATSKLNKGRATNNNYSDILKKFWMMYWPKLVILMGIIILIVILNAIFNNVNKNDRMNDNNDADAQKYTTTMKNANNTVKSVVTVENETSKDSSLPKDKASQDEVGSGVVYKKSGDTLYIVTNAHVVGDKENQKITFSNNKSVVGKVLGKDKWSDLAVVKATSSDSSVKEIAIGDSNNLVLGEPILVVGNPLGVDFKGTVTEGIISGLNRNVPIDFDKDNKYDMLMKAFQIDASVNPGNSGGAVVNREGKLIGVVAAKISMPNVENMSFAIPVNEVQKIVKDLETKGKIDYPDVGVKMKNIVSLNSFERQAVKLPGKVKNGVVVDQVDNNGLADQSGLKKGDVITELDGKLLEDDLRFRQIIFSHKDDLKSITAKIYRDGKEKEINIKLK.

The span at 1 to 20 (MDIGKKHVIPKSQYRRKRRE) shows a compositional bias: basic residues. Residues 1 to 390 (MDIGKKHVIP…ATSKLNKGRA (390 aa)) are disordered. 2 stretches are compositionally biased toward basic and acidic residues: residues 21-64 (FFHN…ERFK) and 71-108 (LEQR…DVSK). The segment covering 126 to 137 (YEQNSEATLSTK) has biased composition (polar residues). The segment covering 138-186 (STDKVESTEMRKLSSDKNKVGHEEQHVLSKPSEHDKETRIDSESSRTDS) has biased composition (basic and acidic residues). A compositionally biased stretch (polar residues) spans 247 to 262 (QQSQNEQTKTYTYGDS). 2 stretches are compositionally biased toward basic and acidic residues: residues 264-296 (QNDK…HIVD) and 310-330 (KTDD…HKQN). A compositionally biased stretch (polar residues) spans 331–347 (ADSSETVGYQSQSTASH). The segment covering 348–364 (RSTEKRNISINDHDKLN) has biased composition (basic and acidic residues). The span at 365-390 (GQKTNTKTSANNNQKKATSKLNKGRA) shows a compositional bias: polar residues. The helical transmembrane segment at 410-430 (LVILMGIIILIVILNAIFNNV) threads the bilayer. Active-site charge relay system residues include histidine 504, aspartate 534, and serine 619. Positions 680–733 (IVSLNSFERQAVKLPGKVKNGVVVDQVDNNGLADQSGLKKGDVITELDGKLLED) constitute a PDZ domain.

The protein belongs to the peptidase S1C family.

It is found in the cell membrane. The polypeptide is Serine protease HtrA-like (Staphylococcus aureus (strain NCTC 8325 / PS 47)).